Reading from the N-terminus, the 263-residue chain is Metaxin-2 (263 aa).

An N-acetylserine modification is found at Ser2.

Belongs to the metaxin family. As to quaternary structure, interacts with MTX1/metaxin-1. Associates with the mitochondrial contact site and cristae organizing system (MICOS) complex, composed of at least MICOS10/MIC10, CHCHD3/MIC19, CHCHD6/MIC25, APOOL/MIC27, IMMT/MIC60, APOO/MIC23/MIC26 and QIL1/MIC13. This complex was also known under the names MINOS or MitOS complex. The MICOS complex associates with mitochondrial outer membrane proteins SAMM50, MTX1 and MTX2 (together described as components of the mitochondrial outer membrane sorting assembly machinery (SAM) complex) and DNAJC11, mitochondrial inner membrane protein TMEM11 and with HSPA9. The MICOS and SAM complexes together with DNAJC11 are part of a large protein complex spanning both membranes termed the mitochondrial intermembrane space bridging (MIB) complex.

The protein resides in the mitochondrion outer membrane. It is found in the mitochondrion. Its function is as follows. Involved in transport of proteins into the mitochondrion. In Homo sapiens (Human), this protein is Metaxin-2 (MTX2).